Reading from the N-terminus, the 110-residue chain is Period circadian protein (110 aa).

The tract at residues 23–97 (VTNTSIAGTG…GGAGGGGGVT (75 aa)) is disordered. 12 repeat units span residues 30–31 (GT), 33–34 (GT), 36–37 (GT), 38–39 (GT), 40–41 (GT), 42–43 (GT), 44–45 (GT), 46–47 (GT), 48–49 (GT), 50–51 (GT), 52–53 (GT), and 54–55 (GT). The span at 30-63 (GTGGTGGTGTGTGTGTGTGTGTGTGTDTGTGTGT) shows a compositional bias: gly residues. Positions 30-79 (GTGGTGGTGTGTGTGTGTGTGTGTGTDTGTGTGTRNGTNSGTNSGTRTGT) are 24 X 2 AA approximate tandem repeats of G-T. The stretch at 56-57 (DT) is one 13; approximate repeat. 3 repeat units span residues 58–59 (GT), 60–61 (GT), and 62–63 (GT). Residues 64–65 (RN) form a 17; approximate repeat. Low complexity predominate over residues 64-83 (RNGTNSGTNSGTRTGTASSY). The stretch at 66-67 (GT) is repeat 18. The 19; approximate repeat unit spans residues 68–69 (NS). Repeat unit 20 spans residues 70–71 (GT). Residues 72–73 (NS) form a 21; approximate repeat. Repeat unit 22 spans residues 74–75 (GT). Residues 76–77 (RT) form a 23; approximate repeat. Copy 24 of the repeat occupies 78 to 79 (GT). The span at 84–96 (RGGGGGAGGGGGV) shows a compositional bias: gly residues.

Forms a heterodimer with timeless (TIM); the complex then translocates into the nucleus. Phosphorylated with a circadian rhythmicity, probably by the double-time protein (dbt). Phosphorylation could be implicated in the stability of per monomer and in the formation of heterodimer per-tim.

The protein resides in the nucleus. Its subcellular location is the cytoplasm. It localises to the perinuclear region. Its function is as follows. Essential for biological clock functions. Determines the period length of circadian and ultradian rhythms; an increase in PER dosage leads to shortened circadian rhythms and a decrease leads to lengthened circadian rhythms. Essential for the circadian rhythmicity of locomotor activity, eclosion behavior, and for the rhythmic component of the male courtship song that originates in the thoracic nervous system. The biological cycle depends on the rhythmic formation and nuclear localization of the TIM-PER complex. Light induces the degradation of TIM, which promotes elimination of PER. Nuclear activity of the heterodimer coordinatively regulates PER and TIM transcription through a negative feedback loop. Behaves as a negative element in circadian transcriptional loop. Does not appear to bind DNA, suggesting indirect transcriptional inhibition. In Drosophila erecta (Fruit fly), this protein is Period circadian protein (per).